The chain runs to 295 residues: Protoheme IX farnesyltransferase 2 (295 aa).

A run of 9 helical transmembrane segments spans residues 9-29, 36-56, 80-100, 108-128, 135-155, 163-183, 209-229, 230-250, and 265-285; these read ITKP…FFLA, LAVF…GCVF, LISL…GVAL, LAAL…SLYL, GTLV…VAVT, LTLL…IAIF, ILIY…SGYA, GMSY…MAWT, and FVFS…DFKV.

The protein belongs to the UbiA prenyltransferase family. Protoheme IX farnesyltransferase subfamily.

It is found in the cell inner membrane. It catalyses the reaction heme b + (2E,6E)-farnesyl diphosphate + H2O = Fe(II)-heme o + diphosphate. It functions in the pathway porphyrin-containing compound metabolism; heme O biosynthesis; heme O from protoheme: step 1/1. Its function is as follows. Converts heme B (protoheme IX) to heme O by substitution of the vinyl group on carbon 2 of heme B porphyrin ring with a hydroxyethyl farnesyl side group. The chain is Protoheme IX farnesyltransferase 2 from Pseudomonas fluorescens (strain Pf0-1).